The primary structure comprises 136 residues: MASSGDSSGKQRSDEEWRAVLSPEQFRILRLKGTELPGTGEYNKFYGDGVYNCAGCGTPLYKSTTKFDSGCGWPAFFEGLPGAINRTPDPDGRRVEITCAACGGHLGHVFKGEGFKTPTDERHCVNSVSIKFTPAS.

One can recognise a MsrB domain in the interval 14–135 (DEEWRAVLSP…NSVSIKFTPA (122 aa)). C53, C56, C99, and C102 together coordinate Zn(2+). C71 and C124 form a disulfide bridge. The active-site Nucleophile is the C124.

The protein belongs to the MsrB Met sulfoxide reductase family. Zn(2+) is required as a cofactor.

Its subcellular location is the cytoplasm. It is found in the cytosol. The enzyme catalyses L-methionyl-[protein] + [thioredoxin]-disulfide + H2O = L-methionyl-(R)-S-oxide-[protein] + [thioredoxin]-dithiol. Its function is as follows. Catalyzes the reduction of methionine sulfoxide (MetSO) to methionine in proteins. Plays a protective role against oxidative stress by restoring activity to proteins that have been inactivated by methionine oxidation. MSRB family specifically reduces the MetSO R-enantiomer. This Oryza sativa subsp. japonica (Rice) protein is Peptide methionine sulfoxide reductase B5 (MSRB5).